A 425-amino-acid chain; its full sequence is Adenylosuccinate synthetase (425 aa).

Residues 12–18 (GDEGKGK) and 40–42 (GHT) contribute to the GTP site. The active-site Proton acceptor is the D13. Mg(2+) is bound by residues D13 and G40. Residues 13-16 (DEGK), 38-41 (NAGH), T127, R141, Q222, T237, and R301 each bind IMP. Residue H41 is the Proton donor of the active site. 297–303 (AVTGRPR) is a substrate binding site. GTP is bound by residues R303, 329 to 331 (KID), and 411 to 413 (SVG).

It belongs to the adenylosuccinate synthetase family. As to quaternary structure, homodimer. Mg(2+) is required as a cofactor.

The protein localises to the cytoplasm. The enzyme catalyses IMP + L-aspartate + GTP = N(6)-(1,2-dicarboxyethyl)-AMP + GDP + phosphate + 2 H(+). It functions in the pathway purine metabolism; AMP biosynthesis via de novo pathway; AMP from IMP: step 1/2. Functionally, plays an important role in the de novo pathway of purine nucleotide biosynthesis. Catalyzes the first committed step in the biosynthesis of AMP from IMP. This chain is Adenylosuccinate synthetase, found in Fusobacterium nucleatum.